Here is a 140-residue protein sequence, read N- to C-terminus: Proline-rich nuclear receptor coactivator 2 (140 aa).

The tract at residues 1–81 (MGGGERYNIP…NSNWNAGLSS (81 aa)) is disordered. Polar residues-rich tracts occupy residues 11-38 (DPQS…SQTK) and 59-81 (AMQN…GLSS). The SH3-binding motif lies at 100-106 (SEPPSPS).

It belongs to the PNRC family. PNRC2 subfamily. Interacts with UPF1/RENT1; preferentially interacts with hyperphosphorylated form. Interacts with DCP1A. Interacts with many nuclear receptors including ESR1, ESRRA, ESRRG, NR3C1/GR, NR5A1, PGR, TR, RAR and RXR. Strong expression is detected in lung, spleen, ovary, thymus, and colon.

The protein resides in the nucleus. The protein localises to the cytoplasm. It localises to the P-body. Its function is as follows. Involved in nonsense-mediated mRNA decay (NMD) by acting as a bridge between the mRNA decapping complex and the NMD machinery. May act by targeting the NMD machinery to the P-body and recruiting the decapping machinery to aberrant mRNAs. Required for UPF1/RENT1 localization to the P-body. Plays a role in glucocorticoid receptor-mediated mRNA degradation by interacting with the glucocorticoid receptor NR3C1 in a ligand-dependent manner when it is bound to the 5' UTR of target mRNAs and recruiting the RNA helicase UPF1 and the mRNA-decapping enzyme DCP1A, leading to RNA decay. Also acts as a nuclear receptor coactivator. May play a role in controlling the energy balance between energy storage and energy expenditure. The protein is Proline-rich nuclear receptor coactivator 2 (Pnrc2) of Mus musculus (Mouse).